We begin with the raw amino-acid sequence, 151 residues long: UPF0178 protein mma_0312 (151 aa).

The protein belongs to the UPF0178 family.

This is UPF0178 protein mma_0312 from Janthinobacterium sp. (strain Marseille) (Minibacterium massiliensis).